The sequence spans 218 residues: Ras-related protein Rab-4A (218 aa).

The GTP site is built by glycine 23, threonine 24, glycine 25, lysine 26, serine 27, cysteine 28, serine 42, histidine 44, and threonine 45. Residue serine 27 coordinates Mg(2+). A Switch 1 motif is present at residues 44–49 (HTIGVE). Positions 45 and 68 each coordinate Mg(2+). Residues 70 to 79 (AGQERFRSVT) carry the Switch 2 motif. Glycine 71 is a GTP binding site. Position 72 is a 5-glutamyl serotonin (glutamine 72). 5 residues coordinate GTP: asparagine 126, lysine 127, aspartate 129, alanine 157, and leucine 158. A Phosphoserine modification is found at serine 190. At serine 204 the chain carries Phosphoserine; by CDK1. 2 S-geranylgeranyl cysteine lipidation sites follow: cysteine 216 and cysteine 218. Position 218 is a cysteine methyl ester (cysteine 218).

This sequence belongs to the small GTPase superfamily. Rab family. Interacts with SGSM1, SGSM2 and SGSM3. Interacts with RAB11FIP1, RABEP1, ZFYVE20 and RUFY1. Interacts (membrane-bound form) with NDRG1; the interaction involves NDRG1 in vesicular recycling of E-cadherin. Interacts (in GTP-bound form) with GRIPAP1 (via N-terminus). Interacts with RABEP1 and RBSN. Does not interact with HPS4. Interacts with RABEP2; this interaction may mediate VEGFR2 cell surface expression. It depends on Mg(2+) as a cofactor. In terms of processing, serotonylation of Gln-72 by TGM2 during activation and aggregation of platelets leads to constitutive activation of GTPase activity. Post-translationally, phosphorylated by CDK1 kinase during mitosis.

It localises to the membrane. Its subcellular location is the cytoplasm. It is found in the early endosome membrane. The protein resides in the recycling endosome membrane. It carries out the reaction GTP + H2O = GDP + phosphate + H(+). Its activity is regulated as follows. Regulated by guanine nucleotide exchange factors (GEFs) which promote the exchange of bound GDP for free GTP. Regulated by GTPase activating proteins (GAPs) which increase the GTP hydrolysis activity. Inhibited by GDP dissociation inhibitors (GDIs). In terms of biological role, the small GTPases Rab are key regulators of intracellular membrane trafficking, from the formation of transport vesicles to their fusion with membranes. Rabs cycle between an inactive GDP-bound form and an active GTP-bound form that is able to recruit to membranes different sets of downstream effectors directly responsible for vesicle formation, movement, tethering and fusion. RAB4A is involved in protein transport. Also plays a role in vesicular traffic. Mediates VEGFR2 endosomal trafficking to enhance VEGFR2 signaling. Acts as a regulator of platelet alpha-granule release during activation and aggregation of platelets. The sequence is that of Ras-related protein Rab-4A from Rattus norvegicus (Rat).